Reading from the N-terminus, the 565-residue chain is Pentatricopeptide repeat-containing protein At3g20730 (565 aa).

PPR repeat units follow at residues 12-46, 47-77, 78-112, 113-147, 148-178, 179-213, 214-248, 249-279, 280-315, 316-351, 352-382, 383-417, 418-448, and 454-484; these read SPSL…GFCS, NLQL…ISKR, DVVS…DVKA, NQFT…NCAG, NLIV…MKER, DLVS…GKKP, DCFT…GFGR, SSAL…TKKR, DLLS…KTKM, DEVV…QIRF, DVAL…MKEK, DVRS…RIKP, NDVT…MINK, and REEH…KEGI. The type E motif; degenerate stretch occupies residues 491–565; that stretch reads TWGAFLDACR…NKAPGYSLVY (75 aa).

The protein belongs to the PPR family. PCMP-E subfamily.

The protein is Pentatricopeptide repeat-containing protein At3g20730 (PCMP-E94) of Arabidopsis thaliana (Mouse-ear cress).